Consider the following 870-residue polypeptide: MDSTKEKCDSYKDDLLLRMGLNDNKAGMEGLDKEKINKIIMEATKGSRFYGNELKKEKQVNQRIENMMQQKAQITSQQLRKAQLQVDRFAMELEQSRNLSNTIVHIDMDAFYAAVEMRDNPELKDKPIAVGSMSMLSTSNYHARRFGVRAAMPGFIAKRLCPQLIIVPPNFDKYRAVSKEVKEILADYDPNFMAMSLDEAYLNITKHLEERQNWPEDKRRYFIKMGSSVENDNPGKEVNKLSEHERSISPLLFEESPSDVQPPGDPFQVNFEEQNNPQILQNSVVFGTSAQEVVKEIRFRIEQKTTLTASAGIAPNTMLAKVCSDKNKPNGQYQILPNRQAVMDFIKDLPIRKVSGIGKVTEKMLKALGIITCTELYQQRALLSLLFSETSWHYFLHISLGLGSTHLTRDGERKSMSVERTFSEINKAEEQYSLCQELCSELAQDLQKERLKGRTVTIKLKNVNFEVKTRASTVSSVVSTAEEIFAIAKELLKTEIDADFPHPLRLRLMGVRISSFPNEEDRKHQQRSIIGFLQAGNQALSATECTLEKTDKDKFVKPLEMSHKKSFFDKKRSERKWSHQDTFKCEAVNKQSFQTSQPFQVLKKKMNENLEISENSDDCQILTCPVCFRAQGCISLEALNKHVDECLDGPSISENFKMFSCSHVSATKVNKKENVPASSLCEKQDYEAHPKIKEISSVDCIALVDTIDNSSKAESIDALSNKHSKEECSSLPSKSFNIEHCHQNSSSTVSLENEDVGSFRQEYRQPYLCEVKTGQALVCPVCNVEQKTSDLTLFNVHVDVCLNKSFIQELRKDKFNPVNQPKESSRSTGSSSGVQKAVTRTKRPGLMTKYSTSKKIKPNNPKHTLDIFFK.

Residues 103–358 enclose the UmuC domain; that stretch reads IVHIDMDAFY…LPIRKVSGIG (256 aa). Residues Asp-107, Asp-198, and Glu-199 each contribute to the Mg(2+) site. UBZ4-type zinc fingers lie at residues 621-651 and 776-806; these read ILTC…DGPS and ALVC…NKSF. The Zn(2+) site is built by Cys-624, Cys-627, His-642, Cys-646, Cys-779, Cys-782, His-797, and Cys-801. The disordered stretch occupies residues 816–858; sequence NPVNQPKESSRSTGSSSGVQKAVTRTKRPGLMTKYSTSKKIKP.

The protein belongs to the DNA polymerase type-Y family. As to quaternary structure, interacts with REV1. Interacts with PCNA. It depends on Mg(2+) as a cofactor. Mn(2+) is required as a cofactor. As to expression, detected at low levels in testis, spleen, prostate and ovary. Detected at very low levels in kidney, colon, brain, heart, liver, lung, placenta, pancreas and peripheral blood leukocytes.

The protein localises to the nucleus. It carries out the reaction DNA(n) + a 2'-deoxyribonucleoside 5'-triphosphate = DNA(n+1) + diphosphate. Its function is as follows. DNA polymerase specifically involved in DNA repair. Plays an important role in translesion synthesis, where the normal high-fidelity DNA polymerases cannot proceed and DNA synthesis stalls. Depending on the context, it inserts the correct base, but causes frequent base transitions, transversions and frameshifts. Lacks 3'-5' proofreading exonuclease activity. Forms a Schiff base with 5'-deoxyribose phosphate at abasic sites, but does not have lyase activity. In Homo sapiens (Human), this protein is DNA polymerase kappa (POLK).